The sequence spans 334 residues: tRNA-dihydrouridine synthase B (334 aa).

Residues 16-18 (PMA) and Gln70 each bind FMN. Cys100 serves as the catalytic Proton donor. FMN is bound by residues Lys139, 200 to 202 (NGD), and 224 to 225 (GR).

Belongs to the Dus family. DusB subfamily. FMN is required as a cofactor.

The enzyme catalyses a 5,6-dihydrouridine in tRNA + NAD(+) = a uridine in tRNA + NADH + H(+). It carries out the reaction a 5,6-dihydrouridine in tRNA + NADP(+) = a uridine in tRNA + NADPH + H(+). In terms of biological role, catalyzes the synthesis of 5,6-dihydrouridine (D), a modified base found in the D-loop of most tRNAs, via the reduction of the C5-C6 double bond in target uridines. This is tRNA-dihydrouridine synthase B from Serratia marcescens.